The following is a 243-amino-acid chain: Phosphoadenosine 5'-phosphosulfate reductase (243 aa).

Cysteine 239 acts as the Nucleophile; cysteine thiosulfonate intermediate in catalysis.

The protein belongs to the PAPS reductase family. CysH subfamily.

The protein resides in the cytoplasm. The enzyme catalyses [thioredoxin]-disulfide + sulfite + adenosine 3',5'-bisphosphate + 2 H(+) = [thioredoxin]-dithiol + 3'-phosphoadenylyl sulfate. It functions in the pathway sulfur metabolism; hydrogen sulfide biosynthesis; sulfite from sulfate: step 3/3. Catalyzes the formation of sulfite from phosphoadenosine 5'-phosphosulfate (PAPS) using thioredoxin as an electron donor. The sequence is that of Phosphoadenosine 5'-phosphosulfate reductase from Proteus mirabilis (strain HI4320).